The following is a 409-amino-acid chain: Rho-GTPase-activating protein BAG7 (409 aa).

Polar residues predominate over residues 1–26; it reads MFNMNLLSTPSSEEGSPQNRSSSMSS. The segment at 1–32 is disordered; that stretch reads MFNMNLLSTPSSEEGSPQNRSSSMSSVEGKKD. The 208-residue stretch at 50-257 folds into the Rho-GAP domain; sequence VSLEESLKVA…FLILHASDII (208 aa). The disordered stretch occupies residues 362 to 409; sequence KLLGNVGNSSNTGIKDPTERVPRGEHKTKHKQRQSWLRRLTSPSRTQP. A compositionally biased stretch (basic and acidic residues) spans 377–386; that stretch reads DPTERVPRGE.

As to quaternary structure, interacts with RHO1.

Its function is as follows. Acts in signal transduction. Activates RHO1. The sequence is that of Rho-GTPase-activating protein BAG7 (BAG7) from Saccharomyces cerevisiae (strain ATCC 204508 / S288c) (Baker's yeast).